Reading from the N-terminus, the 295-residue chain is Diaminopimelate epimerase (295 aa).

Substrate is bound by residues N11 and N78. C87 serves as the catalytic Proton donor. Residues 88–89 (GN), N163, N199, and 220–221 (ER) each bind substrate. The Proton acceptor role is filled by C229. 230–231 (GT) lines the substrate pocket.

Belongs to the diaminopimelate epimerase family. Homodimer.

It is found in the cytoplasm. It carries out the reaction (2S,6S)-2,6-diaminopimelate = meso-2,6-diaminopimelate. It participates in amino-acid biosynthesis; L-lysine biosynthesis via DAP pathway; DL-2,6-diaminopimelate from LL-2,6-diaminopimelate: step 1/1. In terms of biological role, catalyzes the stereoinversion of LL-2,6-diaminopimelate (L,L-DAP) to meso-diaminopimelate (meso-DAP), a precursor of L-lysine and an essential component of the bacterial peptidoglycan. This Mycobacteroides abscessus (strain ATCC 19977 / DSM 44196 / CCUG 20993 / CIP 104536 / JCM 13569 / NCTC 13031 / TMC 1543 / L948) (Mycobacterium abscessus) protein is Diaminopimelate epimerase.